The primary structure comprises 141 residues: Large ribosomal subunit protein uL11 (141 aa).

This sequence belongs to the universal ribosomal protein uL11 family. Part of the ribosomal stalk of the 50S ribosomal subunit. Interacts with L10 and the large rRNA to form the base of the stalk. L10 forms an elongated spine to which L12 dimers bind in a sequential fashion forming a multimeric L10(L12)X complex. Post-translationally, one or more lysine residues are methylated.

In terms of biological role, forms part of the ribosomal stalk which helps the ribosome interact with GTP-bound translation factors. The sequence is that of Large ribosomal subunit protein uL11 from Roseiflexus castenholzii (strain DSM 13941 / HLO8).